The chain runs to 290 residues: Small ribosomal subunit biogenesis GTPase RsgA (290 aa).

The 158-residue stretch at Lys63 to Leu220 folds into the CP-type G domain. Residues Asn112–Asp115 and Gly162–Thr170 each bind GTP. Cys244, Cys249, His251, and Cys257 together coordinate Zn(2+).

This sequence belongs to the TRAFAC class YlqF/YawG GTPase family. RsgA subfamily. Monomer. Associates with 30S ribosomal subunit, binds 16S rRNA. Requires Zn(2+) as cofactor.

Its subcellular location is the cytoplasm. In terms of biological role, one of several proteins that assist in the late maturation steps of the functional core of the 30S ribosomal subunit. Helps release RbfA from mature subunits. May play a role in the assembly of ribosomal proteins into the subunit. Circularly permuted GTPase that catalyzes slow GTP hydrolysis, GTPase activity is stimulated by the 30S ribosomal subunit. The chain is Small ribosomal subunit biogenesis GTPase RsgA from Carboxydothermus hydrogenoformans (strain ATCC BAA-161 / DSM 6008 / Z-2901).